Here is a 308-residue protein sequence, read N- to C-terminus: Spermidine synthase 2 (308 aa).

The region spanning 17-254 is the PABS domain; the sequence is PGWFSEISPL…GVIGFMLCST (238 aa). Residue Q48 participates in S-adenosyl 3-(methylsulfanyl)propylamine binding. Residue Y78 coordinates putrescine. S-adenosyl 3-(methylsulfanyl)propylamine contacts are provided by residues Q79, D103, E123, 154-155, and D173; that span reads DG. Residue D173 is the Proton acceptor of the active site. Putrescine contacts are provided by residues 173–176 and Y242; that span reads DSSD.

It belongs to the spermidine/spermine synthase family.

It carries out the reaction S-adenosyl 3-(methylsulfanyl)propylamine + putrescine = S-methyl-5'-thioadenosine + spermidine + H(+). It functions in the pathway amine and polyamine biosynthesis; spermidine biosynthesis; spermidine from putrescine: step 1/1. The protein is Spermidine synthase 2 of Hyoscyamus niger (Black henbane).